Reading from the N-terminus, the 92-residue chain is Envelope glycoprotein J (92 aa).

Residues 1-22 form the signal peptide; that stretch reads MDRYAVRTWGIVGILGCAAVGA. At 23–49 the chain is on the extracellular side; it reads APTGPASDTTNATARLPTHPPLIRSGG. A glycan (N-linked (GlcNAc...) asparagine; by host) is linked at asparagine 33. The chain crosses the membrane as a helical span at residues 50-70; that stretch reads FAVPLIVGGLCLMILGMACLL. The Cytoplasmic segment spans residues 71–92; sequence EVLRRLGRELARCCPHAGQFAP.

Belongs to the alphaherpesvirinae glycoprotein J family.

The protein localises to the host Golgi apparatus membrane. It is found in the host endoplasmic reticulum membrane. Its subcellular location is the host endosome membrane. In terms of biological role, functions as an activator of viral protein expression and virus production. In turn, promotes cell-to-cell spread as well as syncytia formation. This Homo sapiens (Human) protein is Envelope glycoprotein J (gJ).